Here is a 335-residue protein sequence, read N- to C-terminus: MTHNIHDNISQWMKSNEETPIVMSSRIRLARNLENHVHPLMYATENDGFRVINEVQDALPNFELMRLDQMDQQSKMKMVAKHLISPELIKQPAAAVLVNDDESLSVMINEEDHIRIQAMGTDTTLQALYNQASSIDDELDRSLDISYDEQLGYLTTCPTNIGTGMRASVMLHLPGLSIMKRMTRIAQTINRFGYTIRGIYGEGSQVYGHTYQVSNQLTLGKSELEIIETLTEVVNQIIHDEKQIRQKLDTYNQLETQDRVFRSLGILQNCRMITMEEASYRLSEVKLGIDLNYIELQNFKFNELMVAIQSPFLLDEEDDKSVKEKRADILREHIK.

One can recognise a Phosphagen kinase C-terminal domain in the interval 21–244 (IVMSSRIRLA…NQIIHDEKQI (224 aa)). Residues 24 to 28 (SSRIR), His82, Arg115, 166 to 170 (RASVM), and 197 to 202 (RGIYGE) contribute to the ATP site.

Belongs to the ATP:guanido phosphotransferase family.

It carries out the reaction L-arginyl-[protein] + ATP = N(omega)-phospho-L-arginyl-[protein] + ADP + H(+). Functionally, catalyzes the specific phosphorylation of arginine residues in proteins. The polypeptide is Protein-arginine kinase (Staphylococcus aureus (strain Mu3 / ATCC 700698)).